Here is a 720-residue protein sequence, read N- to C-terminus: Connector enhancer of kinase suppressor of ras 1 (720 aa).

In terms of domain architecture, SAM spans 7-70 (WTPGKVATWL…LGGVEQLQAL (64 aa)). A CRIC domain is found at 78-164 (NLQSLTEGLL…QVLHEDGPAA (87 aa)). A PDZ domain is found at 196–285 (KAVLEQVQLD…GLSLVLKKIP (90 aa)). Positions 285 to 390 (PIPETPPQTP…RKKSKGLATR (106 aa)) are disordered. Residues 304-317 (RSPSLSLAPLSPRA) are compositionally biased toward low complexity. Serine 307 and serine 314 each carry phosphoserine. Over residues 348 to 359 (EPLPIPPEPPAI) the composition is skewed to pro residues. Residues 379-390 (VGRKKSKGLATR) are compositionally biased toward basic residues. The PH domain occupies 403–502 (RPDCDGWLLL…WVRHLITCIS (100 aa)). The interval 504-573 (YQSPGRAPPP…TSFGSLTDSS (70 aa)) is disordered. A compositionally biased stretch (acidic residues) spans 518 to 530 (CYSETEAEDPDDE). Low complexity predominate over residues 533 to 546 (SHSASPSPAQAGSP). The span at 553 to 571 (PAATPTQRSPRTSFGSLTD) shows a compositional bias: polar residues. A coiled-coil region spans residues 615 to 646 (QLNERVHRVRALQSTLKAKLQELQVLEEVLGD). The disordered stretch occupies residues 676 to 720 (QAEGSSHILTSDSTEQSPHSLPSDPEEHSHLCPLTSESSLRPPDL). Positions 678 to 695 (EGSSHILTSDSTEQSPHS) are enriched in polar residues.

Belongs to the CNKSR family. In terms of assembly, interacts with RHO and RALGDS. Post-translationally, phosphorylated on tyrosine.

The protein resides in the cytoplasm. It is found in the membrane. May function as an adapter protein or regulator of Ras signaling pathways. In Homo sapiens (Human), this protein is Connector enhancer of kinase suppressor of ras 1 (CNKSR1).